The primary structure comprises 700 residues: Elongation factor G (700 aa).

The 283-residue stretch at 8-290 (ERYRNIGISA…AVIDYLPSPV (283 aa)) folds into the tr-type G domain. GTP is bound by residues 17 to 24 (AHIDAGKT), 88 to 92 (DTPGH), and 142 to 145 (NKMD).

The protein belongs to the TRAFAC class translation factor GTPase superfamily. Classic translation factor GTPase family. EF-G/EF-2 subfamily.

It is found in the cytoplasm. Catalyzes the GTP-dependent ribosomal translocation step during translation elongation. During this step, the ribosome changes from the pre-translocational (PRE) to the post-translocational (POST) state as the newly formed A-site-bound peptidyl-tRNA and P-site-bound deacylated tRNA move to the P and E sites, respectively. Catalyzes the coordinated movement of the two tRNA molecules, the mRNA and conformational changes in the ribosome. The protein is Elongation factor G of Leptothrix cholodnii (strain ATCC 51168 / LMG 8142 / SP-6) (Leptothrix discophora (strain SP-6)).